Consider the following 465-residue polypeptide: Sodium-dependent phosphate transport protein 1 (465 aa).

N-linked (GlcNAc...) asparagine glycosylation is found at N39, N47, and N56. The next 10 helical transmembrane spans lie at 79 to 99 (GLVLSSVFLGMVVIQVPVGYL), 117 to 137 (SVLSLLIPPAAQVGAALVIVC), 176 to 196 (FVMGPFIALLVSGFICDLLGW), 199 to 219 (VFYIFGIVGCVLSLFWFILLF), 260 to 280 (LPLWAIILNSFAFIWSNNLLV), 299 to 319 (GLLSSLPYLLAYICGIVAGQM), 337 to 357 (LFTTLGIFCPVIFVVCLLYLS), 363 to 383 (TVIFLTLANSTLSFSFCGQLI), 399 to 419 (VTALIGIFGGLISSTLAGLIL), and 431 to 451 (FFLMAGINVTCLAFYLLFAKG).

Belongs to the major facilitator superfamily. Sodium/anion cotransporter family. Interacts with PDZK1.

The protein resides in the apical cell membrane. The catalysed reaction is 3 Na(+)(out) + phosphate(out) = 3 Na(+)(in) + phosphate(in). It carries out the reaction urate(out) = urate(in). Important for the resorption of phosphate by the kidney. May be involved in actively transporting phosphate into cells via Na(+) cotransport in the renal brush border membrane. Plays a role in urate transport in the kidney. The polypeptide is Sodium-dependent phosphate transport protein 1 (Slc17a1) (Rattus norvegicus (Rat)).